The sequence spans 294 residues: Probable 2-(5''-triphosphoribosyl)-3'-dephosphocoenzyme-A synthase (294 aa).

Belongs to the CitG/MdcB family.

It carries out the reaction 3'-dephospho-CoA + ATP = 2'-(5''-triphospho-alpha-D-ribosyl)-3'-dephospho-CoA + adenine. The chain is Probable 2-(5''-triphosphoribosyl)-3'-dephosphocoenzyme-A synthase from Streptococcus pyogenes serotype M5 (strain Manfredo).